The chain runs to 291 residues: Aliphatic sulfonates import ATP-binding protein SsuB 2 (291 aa).

In terms of domain architecture, ABC transporter spans L26–I247. Residue G58 to S65 participates in ATP binding. Residues P264 to L291 are disordered. A compositionally biased stretch (polar residues) spans A281–L291.

It belongs to the ABC transporter superfamily. Aliphatic sulfonates importer (TC 3.A.1.17.2) family. The complex is composed of two ATP-binding proteins (SsuB), two transmembrane proteins (SsuC) and a solute-binding protein (SsuA).

The protein localises to the cell inner membrane. The catalysed reaction is ATP + H2O + aliphatic sulfonate-[sulfonate-binding protein]Side 1 = ADP + phosphate + aliphatic sulfonateSide 2 + [sulfonate-binding protein]Side 1.. Its function is as follows. Part of the ABC transporter complex SsuABC involved in aliphatic sulfonates import. Responsible for energy coupling to the transport system. The sequence is that of Aliphatic sulfonates import ATP-binding protein SsuB 2 from Xanthomonas axonopodis pv. citri (strain 306).